Reading from the N-terminus, the 220-residue chain is UPF0758 protein ASA_4229 (220 aa).

Residues 95–220 form the MPN domain; it reads EQLQRGDALT…TVSFAERGWL (126 aa). Histidine 169, histidine 171, and aspartate 182 together coordinate Zn(2+). The short motif at 169 to 182 is the JAMM motif element; sequence HNHPSGVAEPSRAD.

It belongs to the UPF0758 family.

The chain is UPF0758 protein ASA_4229 from Aeromonas salmonicida (strain A449).